The following is a 299-amino-acid chain: ATP phosphoribosyltransferase (299 aa).

It belongs to the ATP phosphoribosyltransferase family. Long subfamily. Equilibrium between an active dimeric form, an inactive hexameric form and higher aggregates. Interconversion between the various forms is largely reversible and is influenced by the natural substrates and inhibitors of the enzyme. Requires Mg(2+) as cofactor.

It is found in the cytoplasm. It catalyses the reaction 1-(5-phospho-beta-D-ribosyl)-ATP + diphosphate = 5-phospho-alpha-D-ribose 1-diphosphate + ATP. It participates in amino-acid biosynthesis; L-histidine biosynthesis; L-histidine from 5-phospho-alpha-D-ribose 1-diphosphate: step 1/9. Its activity is regulated as follows. Feedback inhibited by histidine. Catalyzes the condensation of ATP and 5-phosphoribose 1-diphosphate to form N'-(5'-phosphoribosyl)-ATP (PR-ATP). Has a crucial role in the pathway because the rate of histidine biosynthesis seems to be controlled primarily by regulation of HisG enzymatic activity. This chain is ATP phosphoribosyltransferase, found in Edwardsiella ictaluri (strain 93-146).